The following is a 1770-amino-acid chain: Transposon Ty2-LR1 Gag-Pol polyprotein (1770 aa).

Polar residues-rich tracts occupy residues 1–11 (MESQQLHQNPH), 19–39 (ASVT…SASN), and 49–60 (KVNSQQETTPGT). 2 disordered regions span residues 1 to 86 (MESQ…GQYQ) and 359 to 453 (QHSE…LPDH). The tract at residues 295–397 (ENNINVSDRL…SSKPRAAKAH (103 aa)) is RNA-binding. Positions 369–381 (TSPNTTNTKVTTR) are enriched in low complexity. Polar residues-rich tracts occupy residues 399–408 (IATSSKFSRV) and 415–435 (ESTV…GQQQ). Catalysis depends on Asp-457, which acts as the For protease activity; shared with dimeric partner. The segment at 579–636 (NVNKSKSVNKYPYPLIHRMLGHANFRSIQKSLKKNAVTYLKESDIEWSNASTYQCPDC) is integrase-type zinc finger-like. The Integrase catalytic domain maps to 656–831 (ESYEPFQYLH…AGLDITTILP (176 aa)). Residues Asp-667 and Asp-732 each coordinate Mg(2+). 4 disordered regions span residues 1005 to 1038 (GGTI…MIDL), 1058 to 1135 (GTEE…KSSK), 1146 to 1165 (LPLP…VSKD), and 1170 to 1205 (HSRQ…TEIE). Polar residues-rich tracts occupy residues 1009–1024 (ESDT…FTAR) and 1065–1082 (QRNS…STPS). The segment covering 1151–1165 (LTHKSPTDTSDVSKD) has biased composition (basic and acidic residues). The Bipartite nuclear localization signal signature appears at 1193–1227 (KKRSLEDNETEIEVSRDTWNNKNMRSLEPPRSKKR). The region spanning 1353–1491 (NDYYITQLDI…DILGLEIKYQ (139 aa)) is the Reverse transcriptase Ty1/copia-type domain. Mg(2+) contacts are provided by Asp-1361, Asp-1442, Asp-1443, Asp-1625, Glu-1667, and Asp-1700. In terms of domain architecture, RNase H Ty1/copia-type spans 1625 to 1767 (DASYGNQPYY…IKTFKLLTNK (143 aa)).

The capsid protein forms a homotrimer, from which the VLPs are assembled. The protease is a homodimer, whose active site consists of two apposed aspartic acid residues. In terms of processing, initially, virus-like particles (VLPs) are composed of the structural unprocessed proteins Gag and Gag-Pol, and also contain the host initiator methionine tRNA (tRNA(i)-Met) which serves as a primer for minus-strand DNA synthesis, and a dimer of genomic Ty RNA. Processing of the polyproteins occurs within the particle and proceeds by an ordered pathway, called maturation. First, the protease (PR) is released by autocatalytic cleavage of the Gag-Pol polyprotein, and this cleavage is a prerequisite for subsequent processing at the remaining sites to release the mature structural and catalytic proteins. Maturation takes place prior to the RT reaction and is required to produce transposition-competent VLPs.

The protein localises to the cytoplasm. It is found in the nucleus. The catalysed reaction is DNA(n) + a 2'-deoxyribonucleoside 5'-triphosphate = DNA(n+1) + diphosphate. It catalyses the reaction Endonucleolytic cleavage to 5'-phosphomonoester.. Its function is as follows. Capsid protein (CA) is the structural component of the virus-like particle (VLP), forming the shell that encapsulates the retrotransposons dimeric RNA genome. The particles are assembled from trimer-clustered units and there are holes in the capsid shells that allow for the diffusion of macromolecules. CA also has nucleocapsid-like chaperone activity, promoting primer tRNA(i)-Met annealing to the multipartite primer-binding site (PBS), dimerization of Ty2 RNA and initiation of reverse transcription. The aspartyl protease (PR) mediates the proteolytic cleavages of the Gag and Gag-Pol polyproteins after assembly of the VLP. Functionally, reverse transcriptase/ribonuclease H (RT) is a multifunctional enzyme that catalyzes the conversion of the retro-elements RNA genome into dsDNA within the VLP. The enzyme displays a DNA polymerase activity that can copy either DNA or RNA templates, and a ribonuclease H (RNase H) activity that cleaves the RNA strand of RNA-DNA heteroduplexes during plus-strand synthesis and hydrolyzes RNA primers. The conversion leads to a linear dsDNA copy of the retrotransposon that includes long terminal repeats (LTRs) at both ends. In terms of biological role, integrase (IN) targets the VLP to the nucleus, where a subparticle preintegration complex (PIC) containing at least integrase and the newly synthesized dsDNA copy of the retrotransposon must transit the nuclear membrane. Once in the nucleus, integrase performs the integration of the dsDNA into the host genome. This Saccharomyces cerevisiae (strain ATCC 204508 / S288c) (Baker's yeast) protein is Transposon Ty2-LR1 Gag-Pol polyprotein (TY2B-LR1).